The following is a 284-amino-acid chain: Polyamine aminopropyltransferase (284 aa).

One can recognise a PABS domain in the interval 2 to 237 (ELWYTEKHTE…GHWLFGFASK (236 aa)). S-methyl-5'-thioadenosine is bound at residue Q31. The spermidine site is built by H62 and D86. Residues E106 and 137–138 (DG) contribute to the S-methyl-5'-thioadenosine site. Catalysis depends on D155, which acts as the Proton acceptor. 155-158 (DSTD) is a spermidine binding site. P162 is an S-methyl-5'-thioadenosine binding site.

The protein belongs to the spermidine/spermine synthase family. In terms of assembly, homodimer or homotetramer.

The protein localises to the cytoplasm. The catalysed reaction is S-adenosyl 3-(methylsulfanyl)propylamine + putrescine = S-methyl-5'-thioadenosine + spermidine + H(+). The protein operates within amine and polyamine biosynthesis; spermidine biosynthesis; spermidine from putrescine: step 1/1. Catalyzes the irreversible transfer of a propylamine group from the amino donor S-adenosylmethioninamine (decarboxy-AdoMet) to putrescine (1,4-diaminobutane) to yield spermidine. This chain is Polyamine aminopropyltransferase, found in Clostridium botulinum (strain Eklund 17B / Type B).